We begin with the raw amino-acid sequence, 995 residues long: UPF0182 protein NFA_45260 (995 aa).

Transmembrane regions (helical) follow at residues 18-38 (VLLVAAVVLAALLLLGPRFTD), 63-83 (IILFAAVALFVGATVWLALLL), 115-135 (FGIGIPVLLGLLAGLVAQSNW), 176-196 (FVAVVIAFFASLVTHYIFGGL), 211-231 (IQLAVIAGLFVLLKAVAYWFD), 260-280 (KLILLAIAVICAVAFFAGVVL), and 288-308 (MAAALLVLSSVLVGAVYPLVV). The segment at 904–957 (ATPFGGDPATRPQPGTAPPVVDSTQPPADGGTPQPQTTPPPTGSAAKDAAAAEL) is disordered. 2 stretches are compositionally biased toward low complexity: residues 927-938 (TQPPADGGTPQP) and 946-955 (GSAAKDAAAA).

The protein belongs to the UPF0182 family.

It is found in the cell membrane. The polypeptide is UPF0182 protein NFA_45260 (Nocardia farcinica (strain IFM 10152)).